We begin with the raw amino-acid sequence, 444 residues long: ATP-dependent protease ATPase subunit HslU (444 aa).

ATP contacts are provided by residues I20 and G62–E67. The segment at L137–K162 is disordered. The ATP site is built by D257, E322, and R394.

It belongs to the ClpX chaperone family. HslU subfamily. In terms of assembly, a double ring-shaped homohexamer of HslV is capped on each side by a ring-shaped HslU homohexamer. The assembly of the HslU/HslV complex is dependent on binding of ATP.

The protein resides in the cytoplasm. In terms of biological role, ATPase subunit of a proteasome-like degradation complex; this subunit has chaperone activity. The binding of ATP and its subsequent hydrolysis by HslU are essential for unfolding of protein substrates subsequently hydrolyzed by HslV. HslU recognizes the N-terminal part of its protein substrates and unfolds these before they are guided to HslV for hydrolysis. In Bordetella petrii (strain ATCC BAA-461 / DSM 12804 / CCUG 43448), this protein is ATP-dependent protease ATPase subunit HslU.